The sequence spans 232 residues: Aspartate/glutamate leucyltransferase (232 aa).

Belongs to the R-transferase family. Bpt subfamily.

The protein localises to the cytoplasm. It catalyses the reaction N-terminal L-glutamyl-[protein] + L-leucyl-tRNA(Leu) = N-terminal L-leucyl-L-glutamyl-[protein] + tRNA(Leu) + H(+). It carries out the reaction N-terminal L-aspartyl-[protein] + L-leucyl-tRNA(Leu) = N-terminal L-leucyl-L-aspartyl-[protein] + tRNA(Leu) + H(+). Functions in the N-end rule pathway of protein degradation where it conjugates Leu from its aminoacyl-tRNA to the N-termini of proteins containing an N-terminal aspartate or glutamate. The sequence is that of Aspartate/glutamate leucyltransferase from Vibrio vulnificus (strain YJ016).